The chain runs to 255 residues: tRNA pseudouridine synthase B (255 aa).

Asp-58 functions as the Nucleophile in the catalytic mechanism.

This sequence belongs to the pseudouridine synthase TruB family. Type 1 subfamily.

The enzyme catalyses uridine(55) in tRNA = pseudouridine(55) in tRNA. Its function is as follows. Responsible for synthesis of pseudouridine from uracil-55 in the psi GC loop of transfer RNAs. The sequence is that of tRNA pseudouridine synthase B from Chlorobium chlorochromatii (strain CaD3).